A 509-amino-acid chain; its full sequence is Leucine-rich repeat-containing protein 14 (509 aa).

The LRR 1; degenerate repeat unit spans residues 111–146 (RQRLRLLDMTGMQEEGLEQNPDTMSLWSRTVTLAKA). One copy of the LRR 2; degenerate repeat lies at 210–234 (RLQCRDFRAEELSLRSTAGLLELLN). Residues 235-262 (PGSVRQIDLRFNNLGLSGLNVLLPHMAK) form an LRR 3; degenerate repeat. The LRR 4; degenerate repeat unit spans residues 263 to 298 (FSHLQSLKLPYSNVDVRRLSPVMEEGLQSFASQLGQ). LRR repeat units follow at residues 299-323 (LGAL…LGGL), 324-355 (QRPL…SSLR), 356-374 (KLDL…PFLH), 380-407 (SGHL…ILCR), and 408-432 (CSWL…VLQN).

The protein belongs to the PRAME family. LRRC14 subfamily.

It is found in the cytoplasm. The polypeptide is Leucine-rich repeat-containing protein 14 (Xenopus laevis (African clawed frog)).